A 406-amino-acid chain; its full sequence is 3-oxoacyl-[acyl-carrier-protein] synthase 1 (406 aa).

The Ketosynthase family 3 (KS3) domain occupies 1–403 (MRRTVITGFG…GTNATLIFKR (403 aa)). Residues cysteine 162, histidine 297, and histidine 332 each act as for beta-ketoacyl synthase activity in the active site.

The protein belongs to the thiolase-like superfamily. Beta-ketoacyl-ACP synthases family. Homodimer.

Its subcellular location is the cytoplasm. The enzyme catalyses a fatty acyl-[ACP] + malonyl-[ACP] + H(+) = a 3-oxoacyl-[ACP] + holo-[ACP] + CO2. It catalyses the reaction (3Z)-decenoyl-[ACP] + malonyl-[ACP] + H(+) = 3-oxo-(5Z)-dodecenoyl-[ACP] + holo-[ACP] + CO2. It participates in lipid metabolism; fatty acid biosynthesis. In terms of biological role, involved in the type II fatty acid elongation cycle. Catalyzes the elongation of a wide range of acyl-ACP by the addition of two carbons from malonyl-ACP to an acyl acceptor. Can also use unsaturated fatty acids. Catalyzes a key reaction in unsaturated fatty acid (UFA) synthesis, the elongation of the cis-3-decenoyl-ACP produced by FabA. The polypeptide is 3-oxoacyl-[acyl-carrier-protein] synthase 1 (fabB) (Haemophilus influenzae (strain ATCC 51907 / DSM 11121 / KW20 / Rd)).